The chain runs to 90 residues: Protein S100-A6 (90 aa).

2 consecutive EF-hand domains span residues 12-47 (LVAIFHKYSGQEGDKNTLSKSELKELIQKELTIGAK) and 48-83 (LQDAEIAKLMDDLDRNKDQVVNFQEYVTFLGALAMI). Residues T28 and E33 each coordinate Ca(2+). N6-acetyllysine is present on K40. K47 carries the post-translational modification N6-acetyllysine; alternate. K47 bears the N6-succinyllysine; alternate mark. Ca(2+)-binding residues include D61, N63, D65, and E72.

It belongs to the S-100 family. As to quaternary structure, homodimer; head to tail assembly of 2 subunits. Interacts with CACYBP in a calcium-dependent manner. Interacts with ANXA2 and ANXA11 (via N-terminus). Interacts with SUGT1. Interacts with TP53; has higher affinity for TP53 that is phosphorylated on its N-terminal domain, and lower affinity for TP53 that is phosphorylated on its C-terminal domain. Interacts with tropomyosin. Interacts with FKBP4. Interacts with PPP5C (via TPR repeats); the interaction is calcium-dependent and modulates PPP5C activity. Interacts with TPPP; this interaction inhibits TPPP dimerization.

It localises to the nucleus envelope. The protein localises to the cytoplasm. The protein resides in the cell membrane. Functionally, may function as calcium sensor and modulator, contributing to cellular calcium signaling. May function by interacting with other proteins, such as TPR-containing proteins, and indirectly play a role in many physiological processes such as the reorganization of the actin cytoskeleton and in cell motility. Binds 2 calcium ions. Calcium binding is cooperative. This Sus scrofa (Pig) protein is Protein S100-A6 (S100A6).